The following is a 117-amino-acid chain: Large ribosomal subunit protein uL22 (117 aa).

Belongs to the universal ribosomal protein uL22 family. In terms of assembly, part of the 50S ribosomal subunit.

This protein binds specifically to 23S rRNA; its binding is stimulated by other ribosomal proteins, e.g. L4, L17, and L20. It is important during the early stages of 50S assembly. It makes multiple contacts with different domains of the 23S rRNA in the assembled 50S subunit and ribosome. Its function is as follows. The globular domain of the protein is located near the polypeptide exit tunnel on the outside of the subunit, while an extended beta-hairpin is found that lines the wall of the exit tunnel in the center of the 70S ribosome. The polypeptide is Large ribosomal subunit protein uL22 (Lacticaseibacillus casei (strain BL23) (Lactobacillus casei)).